The chain runs to 337 residues: Heme A synthase (337 aa).

5 consecutive transmembrane segments (helical) span residues 6-26, 87-107, 119-139, 154-174, and 192-212; these read ITKWLCISCIMVIATLVIGGI, FIHRLLGRITALIYIVPLIYF, LPYIIALLLFCVQGFIGWYMV, LAFHLIIAVIIYHILFYQLIK, and LIFSGIAITVVYVQIFLGALV. Heme is bound at residue H256. 3 helical membrane-spanning segments follow: residues 258–278, 285–305, and 308–328; these read LVGYSVFLVVVVLISCLLKIE, IAYFLMIALFMQVSTGILTLL, and VPIIIASIHQLFAIILLSIII. H316 provides a ligand contact to heme.

It belongs to the COX15/CtaA family. Type 2 subfamily. Interacts with CtaB. Heme b serves as cofactor.

The protein resides in the cell membrane. It catalyses the reaction Fe(II)-heme o + 2 A + H2O = Fe(II)-heme a + 2 AH2. Its pathway is porphyrin-containing compound metabolism; heme A biosynthesis; heme A from heme O: step 1/1. In terms of biological role, catalyzes the conversion of heme O to heme A by two successive hydroxylations of the methyl group at C8. The first hydroxylation forms heme I, the second hydroxylation results in an unstable dihydroxymethyl group, which spontaneously dehydrates, resulting in the formyl group of heme A. The protein is Heme A synthase of Rickettsia conorii (strain ATCC VR-613 / Malish 7).